The chain runs to 120 residues: MALTVPLIVLAVLLSLMESPASAPVHRGRGGWTLNSAGYLLGPVLHPPSRAEGGGKGKTALGILDLWKAIDGLPYPQSQLASKRSLGETFAKPDSGVTFVGVPDVVPWKRIRPGTTRFQI.

Positions 1–22 are cleaved as a signal peptide; it reads MALTVPLIVLAVLLSLMESPAS. The propeptide occupies 85–120; that stretch reads SLGETFAKPDSGVTFVGVPDVVPWKRIRPGTTRFQI.

Belongs to the galanin family.

The protein resides in the secreted. Functionally, hypothalamic neuropeptide which binds to the G-protein-coupled galanin receptors (GALR1, GALR2 and GALR3). Involved in a large number of putative physiological functions in CNS homeostatic processes, including the regulation of gonadotropin-releasing hormone secretion. The sequence is that of Galanin-like peptide (GALP) from Sus scrofa (Pig).